Reading from the N-terminus, the 295-residue chain is Large ribosomal subunit protein uL15m (295 aa).

A mitochondrion-targeting transit peptide spans M1–R20. A disordered region spans residues V21 to E67. Positions S32 to G51 are enriched in basic residues.

The protein belongs to the universal ribosomal protein uL15 family. As to quaternary structure, component of the mitochondrial ribosome large subunit (39S) which comprises a 16S rRNA and about 50 distinct proteins.

It localises to the mitochondrion. In Mus musculus (Mouse), this protein is Large ribosomal subunit protein uL15m (Mrpl15).